A 97-amino-acid chain; its full sequence is Protein S100-A10 (97 aa).

An N6-acetyllysine mark is found at K23, K28, K54, and K57. The region spanning K47 to A82 is the EF-hand domain. The tract at residues D60–S71 is ancestral calcium site.

It belongs to the S-100 family. Heterotetramer containing 2 light chains of S100A10/p11 and 2 heavy chains of ANXA2/p36. Interacts with SCN10A. Interacts with TASOR.

In terms of biological role, because S100A10 induces the dimerization of ANXA2/p36, it may function as a regulator of protein phosphorylation in that the ANXA2 monomer is the preferred target (in vitro) of tyrosine-specific kinase. This Mus musculus (Mouse) protein is Protein S100-A10 (S100a10).